The following is an 863-amino-acid chain: Scm-like with four MBT domains protein 1 (863 aa).

4 MBT repeats span residues 20–120 (FSWE…LEAP), 128–232 (SDWN…LQPP), 242–346 (ADWQ…INPP), and 354–451 (FDWA…LSTP). The tract at residues 638 to 773 (KKKNKRIGRP…SDDENKPPSP (136 aa)) is disordered. Over residues 660 to 679 (KSSKRRKRRKNIFVHKKKRS) the composition is skewed to basic residues. Residues 680-691 (SASVDNTPVGSP) are compositionally biased toward polar residues. Acidic residues-rich tracts occupy residues 696–710 (GEDEEDADDGDEDSL) and 718–727 (QQEELQEESE). The segment covering 734–744 (SSSSPTQSETP) has biased composition (low complexity). Ser764 and Ser772 each carry phosphoserine. An SAM domain is found at 793–861 (WSVADVVRFI…RIKFAFYEQF (69 aa)).

Interacts with MYOD1. Component of the SLC (SFMBT1-LSD1-CoREST) corepressor complex, which also contains KDM1A/LSD1 and RCOR1/CoREST. Interacts with KDM1A/LSD1 and RCOR1/CoREST. Interacts with MYOD1. Interacts with L3MBTL3. In terms of tissue distribution, highly expressed in the testis, low expression is detected in brain, kidney, heart and lung. Highly expressed in germ cells, where it associates with the synaptic regions of meiotic chromosomes in pachytene stage spermatocytes.

The protein resides in the nucleus. Functionally, histone-binding protein, which is part of various corepressor complexes. Mediates the recruitment of corepressor complexes to target genes, followed by chromatin compaction and repression of transcription. Plays a role during myogenesis: required for the maintenance of undifferentiated states of myogenic progenitor cells via interaction with MYOD1. Interaction with MYOD1 leads to the recruitment of associated corepressors and silencing of MYOD1 target genes. Part of the SLC complex in germ cells, where it may play a role during spermatogenesis. The chain is Scm-like with four MBT domains protein 1 (Sfmbt1) from Mus musculus (Mouse).